The chain runs to 286 residues: Nucleotide-binding protein HAPS_0087 (286 aa).

8 to 15 (GRSGSGKS) lines the ATP pocket. Residue 56 to 59 (DVRN) coordinates GTP.

The protein belongs to the RapZ-like family.

Its function is as follows. Displays ATPase and GTPase activities. The chain is Nucleotide-binding protein HAPS_0087 from Glaesserella parasuis serovar 5 (strain SH0165) (Haemophilus parasuis).